Consider the following 417-residue polypeptide: RH-like protein IC (417 aa).

The next 11 membrane-spanning stretches (helical) occupy residues 12-32, 44-64, 77-97, 125-145, 172-192, 203-223, 238-258, 265-285, 287-307, 331-351, and 358-378; these read CLPL…YFFT, LVAS…GFGF, VAFN…LDGF, ISAG…MVLV, FYVF…KPLP, TIPS…WPSF, VFNT…VSSL, INMT…GTSC, LITS…ISIG, NFSL…VLHT, and MVGF…AIAV.

The protein belongs to the ammonium transporter (TC 2.A.49) family. Rh subfamily.

Its subcellular location is the membrane. May be part of an oligomeric complex which is likely to have a transport or channel function in the erythrocyte membrane. In Gorilla gorilla gorilla (Western lowland gorilla), this protein is RH-like protein IC.